The sequence spans 62 residues: Overexpressed in colon carcinoma 1 protein homolog (62 aa).

Over residues 1–16 the composition is skewed to gly residues; it reads MGCGNSTAGGAGGRGA. Residues 1–62 form a disordered region; the sequence is MGCGNSTAGG…SGQTKAAPKD (62 aa).

The protein belongs to the OCC1 family.

The chain is Overexpressed in colon carcinoma 1 protein homolog from Gallus gallus (Chicken).